The primary structure comprises 283 residues: 4-diphosphocytidyl-2-C-methyl-D-erythritol kinase (283 aa).

Residue Lys10 is part of the active site. 99–109 (PMGGGLGGGSS) contributes to the ATP binding site. Asp141 is an active-site residue.

This sequence belongs to the GHMP kinase family. IspE subfamily. As to quaternary structure, homodimer.

The enzyme catalyses 4-CDP-2-C-methyl-D-erythritol + ATP = 4-CDP-2-C-methyl-D-erythritol 2-phosphate + ADP + H(+). It participates in isoprenoid biosynthesis; isopentenyl diphosphate biosynthesis via DXP pathway; isopentenyl diphosphate from 1-deoxy-D-xylulose 5-phosphate: step 3/6. Its function is as follows. Catalyzes the phosphorylation of the position 2 hydroxy group of 4-diphosphocytidyl-2C-methyl-D-erythritol. The sequence is that of 4-diphosphocytidyl-2-C-methyl-D-erythritol kinase from Escherichia coli O9:H4 (strain HS).